A 297-amino-acid polypeptide reads, in one-letter code: Aspartate carbamoyltransferase catalytic subunit (297 aa).

Carbamoyl phosphate-binding residues include Arg49 and Thr50. Residue Lys77 participates in L-aspartate binding. Residues Arg99, His129, and Gln132 each contribute to the carbamoyl phosphate site. Positions 162 and 215 each coordinate L-aspartate. 2 residues coordinate carbamoyl phosphate: Gly256 and Pro257.

It belongs to the aspartate/ornithine carbamoyltransferase superfamily. ATCase family. As to quaternary structure, heterododecamer (2C3:3R2) of six catalytic PyrB chains organized as two trimers (C3), and six regulatory PyrI chains organized as three dimers (R2).

It catalyses the reaction carbamoyl phosphate + L-aspartate = N-carbamoyl-L-aspartate + phosphate + H(+). The protein operates within pyrimidine metabolism; UMP biosynthesis via de novo pathway; (S)-dihydroorotate from bicarbonate: step 2/3. Its function is as follows. Catalyzes the condensation of carbamoyl phosphate and aspartate to form carbamoyl aspartate and inorganic phosphate, the committed step in the de novo pyrimidine nucleotide biosynthesis pathway. The protein is Aspartate carbamoyltransferase catalytic subunit of Legionella pneumophila (strain Corby).